Here is a 517-residue protein sequence, read N- to C-terminus: Light-independent protochlorophyllide reductase subunit B (517 aa).

D36 contacts [4Fe-4S] cluster. D285 acts as the Proton donor in catalysis. 420–421 (GL) is a substrate binding site.

Belongs to the ChlB/BchB/BchZ family. In terms of assembly, protochlorophyllide reductase is composed of three subunits; BchL, BchN and BchB. Forms a heterotetramer of two BchB and two BchN subunits. The cofactor is [4Fe-4S] cluster.

The catalysed reaction is chlorophyllide a + oxidized 2[4Fe-4S]-[ferredoxin] + 2 ADP + 2 phosphate = protochlorophyllide a + reduced 2[4Fe-4S]-[ferredoxin] + 2 ATP + 2 H2O. It functions in the pathway porphyrin-containing compound metabolism; bacteriochlorophyll biosynthesis (light-independent). In terms of biological role, component of the dark-operative protochlorophyllide reductase (DPOR) that uses Mg-ATP and reduced ferredoxin to reduce ring D of protochlorophyllide (Pchlide) to form chlorophyllide a (Chlide). This reaction is light-independent. The NB-protein (BchN-BchB) is the catalytic component of the complex. This Bradyrhizobium sp. (strain BTAi1 / ATCC BAA-1182) protein is Light-independent protochlorophyllide reductase subunit B.